The sequence spans 307 residues: Methionyl-tRNA formyltransferase (307 aa).

108 to 111 lines the (6S)-5,6,7,8-tetrahydrofolate pocket; sequence SLLP.

This sequence belongs to the Fmt family.

The catalysed reaction is L-methionyl-tRNA(fMet) + (6R)-10-formyltetrahydrofolate = N-formyl-L-methionyl-tRNA(fMet) + (6S)-5,6,7,8-tetrahydrofolate + H(+). In terms of biological role, attaches a formyl group to the free amino group of methionyl-tRNA(fMet). The formyl group appears to play a dual role in the initiator identity of N-formylmethionyl-tRNA by promoting its recognition by IF2 and preventing the misappropriation of this tRNA by the elongation apparatus. The chain is Methionyl-tRNA formyltransferase from Stenotrophomonas maltophilia (strain K279a).